Consider the following 373-residue polypeptide: Probable G-protein coupled receptor 173 (373 aa).

The Extracellular portion of the chain corresponds to 1-26 (MANTTGEPEEVSGALSPPSAVAYVKL). N-linked (GlcNAc...) asparagine glycosylation occurs at N3. The chain crosses the membrane as a helical span at residues 27 to 47 (VLLGLIMCVSLAGNAILSLLV). Over 48-59 (LKDRALHKAPYY) the chain is Cytoplasmic. Residues 60–80 (FLLDLCLADGIRSAVCFPFVL) traverse the membrane as a helical segment. Over 81 to 97 (ASVRHGSSWTFSALSCK) the chain is Extracellular. An intrachain disulfide couples C96 to C174. Residues 98 to 118 (IVAFMAVLFCFHAAFMLFCIS) form a helical membrane-spanning segment. The Cytoplasmic segment spans residues 119–139 (VTRYMAIAHHRFYAKRMTLWT). The chain crosses the membrane as a helical span at residues 140 to 160 (CAAVICMAWTLSVAMAFPPVF). Over 161 to 188 (DVGTYKFIREEDQCIFEHRYFKANDTLG) the chain is Extracellular. N184 is a glycosylation site (N-linked (GlcNAc...) asparagine). Residues 189–209 (FMLMLAVLMAATHAVYGKLLL) form a helical membrane-spanning segment. Topologically, residues 210 to 287 (FEYRHRKMKP…VKGEKQLGRM (78 aa)) are cytoplasmic. Residues 288 to 308 (FYAITLLFLLLWSPYIVACYW) form a helical membrane-spanning segment. Residues 309–322 (RVFVKACAVPHRYL) are Extracellular-facing. Residues 323–343 (ATAVWMSFAQAAVNPIVCFLL) form a helical membrane-spanning segment. Over 344–373 (NKDLKKCLRTHAPCWGTGGAPAPREPYCVM) the chain is Cytoplasmic.

Belongs to the G-protein coupled receptor 1 family.

The protein resides in the cell membrane. Its function is as follows. Is a receptor for the SMIM20 derived peptides Phoenixin-14 and Phoenixin-20. It mediates the Phoenixin-14 and Phoenixin-20 augmentation of gonadotropin-releasing hormone (GNRH) signaling in the hypothalamus and pituitary gland. In the ovary, it mediates the effects of Phoenixin-14 and Phoenixin-20 induced granulosa cell proliferation during follicular growth. This chain is Probable G-protein coupled receptor 173 (GPR173), found in Bos taurus (Bovine).